We begin with the raw amino-acid sequence, 376 residues long: Flagellin B (376 aa).

Positions 103–130 (SNSSSERQAIQEEVSALNDELNRIAETT) form a coiled coil.

Belongs to the bacterial flagellin family. In terms of assembly, heteromer of multiple flagellin subunits including FlaA, FlaB, FlaC, FlaD and possibly FlaE.

The protein resides in the secreted. Its subcellular location is the bacterial flagellum. Its function is as follows. Flagellin is the subunit protein which polymerizes to form the filaments of bacterial flagella. FlaB is not essential for flagellar synthesis and motility. This chain is Flagellin B (flaB), found in Vibrio anguillarum (Listonella anguillarum).